A 357-amino-acid polypeptide reads, in one-letter code: Tetraacyldisaccharide 4'-kinase (357 aa).

Residue 67 to 74 participates in ATP binding; that stretch reads SVGGTGKT.

This sequence belongs to the LpxK family.

It catalyses the reaction a lipid A disaccharide + ATP = a lipid IVA + ADP + H(+). Its pathway is glycolipid biosynthesis; lipid IV(A) biosynthesis; lipid IV(A) from (3R)-3-hydroxytetradecanoyl-[acyl-carrier-protein] and UDP-N-acetyl-alpha-D-glucosamine: step 6/6. Functionally, transfers the gamma-phosphate of ATP to the 4'-position of a tetraacyldisaccharide 1-phosphate intermediate (termed DS-1-P) to form tetraacyldisaccharide 1,4'-bis-phosphate (lipid IVA). This chain is Tetraacyldisaccharide 4'-kinase, found in Syntrophotalea carbinolica (strain DSM 2380 / NBRC 103641 / GraBd1) (Pelobacter carbinolicus).